The following is a 353-amino-acid chain: Photosystem II D2 protein (353 aa).

Residue Thr2 is modified to N-acetylthreonine. Phosphothreonine is present on Thr2. A helical transmembrane segment spans residues 41-61; sequence CAYFAVGGWFTGTTFVTSWYT. Position 118 (His118) interacts with chlorophyll a. Residues 125–141 form a helical membrane-spanning segment; the sequence is GFMLRQFELARSVQLRP. Gln130 and Asn143 together coordinate pheophytin a. A helical membrane pass occupies residues 153–166; the sequence is VFVSVFLIYPLGQS. His198 provides a ligand contact to chlorophyll a. Residues 208-228 traverse the membrane as a helical segment; it reads AALLCAIHGATVENTLFEDGD. A plastoquinone-binding residues include His215 and Phe262. His215 lines the Fe cation pocket. Residue His269 participates in Fe cation binding. The chain crosses the membrane as a helical span at residues 279–295; that stretch reads GLWMSALGVVGLALNLR.

It belongs to the reaction center PufL/M/PsbA/D family. PSII is composed of 1 copy each of membrane proteins PsbA, PsbB, PsbC, PsbD, PsbE, PsbF, PsbH, PsbI, PsbJ, PsbK, PsbL, PsbM, PsbT, PsbX, PsbY, PsbZ, Psb30/Ycf12, at least 3 peripheral proteins of the oxygen-evolving complex and a large number of cofactors. It forms dimeric complexes. Requires The D1/D2 heterodimer binds P680, chlorophylls that are the primary electron donor of PSII, and subsequent electron acceptors. It shares a non-heme iron and each subunit binds pheophytin, quinone, additional chlorophylls, carotenoids and lipids. There is also a Cl(-1) ion associated with D1 and D2, which is required for oxygen evolution. The PSII complex binds additional chlorophylls, carotenoids and specific lipids. as cofactor.

The protein localises to the plastid. It is found in the chloroplast thylakoid membrane. The catalysed reaction is 2 a plastoquinone + 4 hnu + 2 H2O = 2 a plastoquinol + O2. Functionally, photosystem II (PSII) is a light-driven water:plastoquinone oxidoreductase that uses light energy to abstract electrons from H(2)O, generating O(2) and a proton gradient subsequently used for ATP formation. It consists of a core antenna complex that captures photons, and an electron transfer chain that converts photonic excitation into a charge separation. The D1/D2 (PsbA/PsbD) reaction center heterodimer binds P680, the primary electron donor of PSII as well as several subsequent electron acceptors. D2 is needed for assembly of a stable PSII complex. The polypeptide is Photosystem II D2 protein (Lactuca sativa (Garden lettuce)).